The following is a 1316-amino-acid chain: DNA-directed RNA polymerase subunit beta' (1316 aa).

Zn(2+) is bound by residues Cys60, Cys62, Cys75, and Cys78. Positions 535, 537, and 539 each coordinate Mg(2+). Zn(2+) is bound by residues Cys891, Cys968, Cys975, and Cys978.

Belongs to the RNA polymerase beta' chain family. As to quaternary structure, the RNAP catalytic core consists of 2 alpha, 1 beta, 1 beta' and 1 omega subunit. When a sigma factor is associated with the core the holoenzyme is formed, which can initiate transcription. Mg(2+) is required as a cofactor. The cofactor is Zn(2+).

It carries out the reaction RNA(n) + a ribonucleoside 5'-triphosphate = RNA(n+1) + diphosphate. Its function is as follows. DNA-dependent RNA polymerase catalyzes the transcription of DNA into RNA using the four ribonucleoside triphosphates as substrates. The protein is DNA-directed RNA polymerase subunit beta' of Mycolicibacterium paratuberculosis (strain ATCC BAA-968 / K-10) (Mycobacterium paratuberculosis).